A 372-amino-acid chain; its full sequence is NAD(P)H-quinone oxidoreductase subunit 1 (372 aa).

Helical transmembrane passes span 28 to 48 (IWLPLPLLLMIIGATVGVLVV), 97 to 117 (WLFTLGPALVVIPVFLSYLIV), 130 to 150 (VGIFLWISLSSIAPIGLLMSG), 176 to 196 (LALAVLAIAMMSNSLSTIDIV), 204 to 224 (ILGWNIWRQPVGFLIFWIAAL), 265 to 285 (LVLSALIVSILYLGGWEFPIP), 308 to 328 (SLGIIMTLVKTYALVFIAVLL), and 351 to 371 (VALVNLLLTAALKLAFPIAFG).

This sequence belongs to the complex I subunit 1 family. As to quaternary structure, NDH-1 is composed of at least 11 different subunits.

It localises to the cellular thylakoid membrane. The enzyme catalyses a plastoquinone + NADH + (n+1) H(+)(in) = a plastoquinol + NAD(+) + n H(+)(out). It catalyses the reaction a plastoquinone + NADPH + (n+1) H(+)(in) = a plastoquinol + NADP(+) + n H(+)(out). In terms of biological role, NDH-1 shuttles electrons from an unknown electron donor, via FMN and iron-sulfur (Fe-S) centers, to quinones in the respiratory and/or the photosynthetic chain. The immediate electron acceptor for the enzyme in this species is believed to be plastoquinone. Couples the redox reaction to proton translocation, and thus conserves the redox energy in a proton gradient. This chain is NAD(P)H-quinone oxidoreductase subunit 1, found in Picosynechococcus sp. (strain ATCC 27264 / PCC 7002 / PR-6) (Agmenellum quadruplicatum).